Here is a 939-residue protein sequence, read N- to C-terminus: Probable importin ECU10_0620 (939 aa).

Positions 23–90 (AEAMLMDLEK…VENILDLFLY (68 aa)) constitute an Importin N-terminal domain.

Belongs to the importin beta family.

Its subcellular location is the nucleus. The protein resides in the cytoplasm. In terms of biological role, active in protein import into the nucleus. The chain is Probable importin ECU10_0620 from Encephalitozoon cuniculi (strain GB-M1) (Microsporidian parasite).